A 482-amino-acid polypeptide reads, in one-letter code: ATP synthase subunit beta, chloroplastic (482 aa).

162 to 169 (GGAGVGKT) serves as a coordination point for ATP.

It belongs to the ATPase alpha/beta chains family. F-type ATPases have 2 components, CF(1) - the catalytic core - and CF(0) - the membrane proton channel. CF(1) has five subunits: alpha(3), beta(3), gamma(1), delta(1), epsilon(1). CF(0) has four main subunits: a(1), b(1), b'(1) and c(9-12).

Its subcellular location is the plastid. The protein localises to the chloroplast thylakoid membrane. The enzyme catalyses ATP + H2O + 4 H(+)(in) = ADP + phosphate + 5 H(+)(out). In terms of biological role, produces ATP from ADP in the presence of a proton gradient across the membrane. The catalytic sites are hosted primarily by the beta subunits. This is ATP synthase subunit beta, chloroplastic from Pleurastrum terricola (Filamentous green alga).